The chain runs to 498 residues: ATP synthase subunit beta, chloroplastic (498 aa).

Position 172–179 (G172–T179) interacts with ATP.

This sequence belongs to the ATPase alpha/beta chains family. In terms of assembly, F-type ATPases have 2 components, CF(1) - the catalytic core - and CF(0) - the membrane proton channel. CF(1) has five subunits: alpha(3), beta(3), gamma(1), delta(1), epsilon(1). CF(0) has four main subunits: a(1), b(1), b'(1) and c(9-12).

The protein resides in the plastid. It localises to the chloroplast thylakoid membrane. It catalyses the reaction ATP + H2O + 4 H(+)(in) = ADP + phosphate + 5 H(+)(out). Produces ATP from ADP in the presence of a proton gradient across the membrane. The catalytic sites are hosted primarily by the beta subunits. This is ATP synthase subunit beta, chloroplastic from Agrostis stolonifera (Creeping bentgrass).